The chain runs to 556 residues: 2-succinyl-5-enolpyruvyl-6-hydroxy-3-cyclohexene-1-carboxylate synthase (556 aa).

Belongs to the TPP enzyme family. MenD subfamily. In terms of assembly, homodimer. Requires Mg(2+) as cofactor. Mn(2+) serves as cofactor. It depends on thiamine diphosphate as a cofactor.

It catalyses the reaction isochorismate + 2-oxoglutarate + H(+) = 5-enolpyruvoyl-6-hydroxy-2-succinyl-cyclohex-3-ene-1-carboxylate + CO2. Its pathway is quinol/quinone metabolism; 1,4-dihydroxy-2-naphthoate biosynthesis; 1,4-dihydroxy-2-naphthoate from chorismate: step 2/7. It participates in quinol/quinone metabolism; menaquinone biosynthesis. In terms of biological role, catalyzes the thiamine diphosphate-dependent decarboxylation of 2-oxoglutarate and the subsequent addition of the resulting succinic semialdehyde-thiamine pyrophosphate anion to isochorismate to yield 2-succinyl-5-enolpyruvyl-6-hydroxy-3-cyclohexene-1-carboxylate (SEPHCHC). This Escherichia coli (strain SMS-3-5 / SECEC) protein is 2-succinyl-5-enolpyruvyl-6-hydroxy-3-cyclohexene-1-carboxylate synthase.